We begin with the raw amino-acid sequence, 147 residues long: Large ribosomal subunit protein bL9 (147 aa).

Belongs to the bacterial ribosomal protein bL9 family.

Functionally, binds to the 23S rRNA. This is Large ribosomal subunit protein bL9 from Clostridium kluyveri (strain NBRC 12016).